Reading from the N-terminus, the 353-residue chain is ATPase GET3A (353 aa).

27 to 34 contributes to the ATP binding site; the sequence is KGGVGKTT. The active site involves aspartate 56. 2 residues coordinate ATP: glutamate 226 and asparagine 253. The stretch at 320-353 forms a coiled coil; it reads TTSRSNVEELERKVHTLRLQLKTAEEELERVKSG.

It belongs to the arsA ATPase family. As to quaternary structure, homodimer. Interacts with GET1 and GET4.

Its subcellular location is the cytoplasm. The protein localises to the cytosol. It is found in the endoplasmic reticulum. The enzyme catalyses ATP + H2O = ADP + phosphate + H(+). ATPase required for the post-translational delivery of tail-anchored (TA) proteins to the endoplasmic reticulum. Recognizes and selectively binds the transmembrane domain of TA proteins in the cytosol. This complex then targets to the endoplasmic reticulum by membrane-bound receptors, where the tail-anchored protein is released for insertion. This process is regulated by ATP binding and hydrolysis. ATP binding drives the homodimer towards the closed dimer state, facilitating recognition of newly synthesized TA membrane proteins. ATP hydrolysis is required for insertion. Subsequently, the homodimer reverts towards the open dimer state, lowering its affinity for the membrane-bound receptor, and returning it to the cytosol to initiate a new round of targeting. Involved in the control of root hair growth through the regulation of syntaxin SYP123 expression. This Arabidopsis thaliana (Mouse-ear cress) protein is ATPase GET3A.